The chain runs to 216 residues: Regulator of G-protein signaling 19 (216 aa).

Residues 1 to 19 (MPTPHEAEKQHTGPEEADR) show a composition bias toward basic and acidic residues. The interval 1 to 30 (MPTPHEAEKQHTGPEEADRPPSMSSHDAAP) is disordered. The residue at position 24 (serine 24) is a Phosphoserine; by CK2. Residues 90–206 (SFDKLMHSPT…LTSPTYRSLL (117 aa)) form the RGS domain. Serine 97 is subject to Phosphoserine. Serine 151 is subject to Phosphoserine; by MAPK1 and MAPK3. Positions 207–216 (LQGAPQSSEA) are interaction with GIPC.

As to quaternary structure, interacts with GIPC PDZ domain. Interacts with GNAO1. In terms of processing, fatty acylated. Heavily palmitoylated in the cysteine string motif. Phosphorylated, mainly on serine residues.

It localises to the membrane. Functionally, inhibits signal transduction by increasing the GTPase activity of G protein alpha subunits thereby driving them into their inactive GDP-bound form. Binds to G-alpha subfamily 1 members, predominantly to G(i)-alpha-3. Activity on G(z)-alpha is inhibited by phosphorylation and palmitoylation of the G-protein. This is Regulator of G-protein signaling 19 (Rgs19) from Rattus norvegicus (Rat).